Reading from the N-terminus, the 407-residue chain is Flagellar calcium-binding protein TB-44A (407 aa).

The segment at 1 to 27 is disordered; it reads MGCSASKDTTNSKDGAASKGGKDGKTT. Positions 25 to 399 are 2 X 186 AA almost perfect repeats; that stretch reads KTTADRKVAW…LQVCGDPDGE (375 aa). An EF-hand 1 domain is found at 48–83; that stretch reads ESKSRRIELFKRFDTNGTGKLSFREVLDGCYSILKL. The Ca(2+) site is built by D61, N63, T65, K67, and E72. The tract at residues 110–121 is ancestral calcium site 2; it reads GVGEEDLVEFLE. 3 consecutive EF-hand domains span residues 130-165, 167-202, and 237-272; these read YDIF…WKEW, VDIT…KKLQ, and ESKS…ILKL. The Ca(2+) site is built by D143, D145, S147, E154, D180, N182, S184, E191, D250, N252, T254, K256, and E261. Residues 299–310 are ancestral calcium site 6; it reads GVGEEDLVEFLE. EF-hand domains lie at 319-354 and 356-391; these read YDIF…WKEW and VDIT…KKLQ. 8 residues coordinate Ca(2+): D332, D334, S336, E343, D369, N371, S373, and E380.

This sequence belongs to the calflagin family.

It is found in the cell projection. It localises to the cilium. Its subcellular location is the flagellum. In terms of biological role, may contribute to the rapid motility of the trypanosomes, playing a role either in flagellar structure or in calcium metabolism. Could alternate between a GDP-bound inactive form to a calcium/GTP-bound active form. The protein is Flagellar calcium-binding protein TB-44A of Trypanosoma brucei brucei.